Consider the following 310-residue polypeptide: Olfactory receptor 5H14 (310 aa).

Residues 1–28 (MEEENATLLTEFVLTGFLYQPQWKIPLF) are Extracellular-facing. Residue N5 is glycosylated (N-linked (GlcNAc...) asparagine). A helical transmembrane segment spans residues 29 to 49 (LAFLVIYLITIMGNLGLIAVI). At 50–56 (WKDPHLH) the chain is on the cytoplasmic side. The helical transmembrane segment at 57-77 (IPMYLLLGNLAFVDALLSSSV) threads the bilayer. The Extracellular portion of the chain corresponds to 78–98 (TLKMLINFLAKSKMISLSECK). Cysteines 97 and 179 form a disulfide. The chain crosses the membrane as a helical span at residues 99-119 (IQLFSFAISVTTECFLLATMA). The Cytoplasmic segment spans residues 120–143 (YDRYVAICKPLLYPAIMTNGLCIR). The chain crosses the membrane as a helical span at residues 144–164 (LLILSYVGGLLHALIHEGFLF). At 165–195 (RLTFCNSNIIQHFYCDIIPLLKISYTDSSIN) the chain is on the extracellular side. The chain crosses the membrane as a helical span at residues 196 to 216 (FLMVFIFAGSIQVFTIGTVLI). Residues 217 to 240 (SYIFVLYTILKKKSVKGMRKAFST) lie on the Cytoplasmic side of the membrane. A helical membrane pass occupies residues 241–261 (CGAHLLSVSLYYGPLAFMYMG). Residues 262–271 (SASPQADDQD) are Extracellular-facing. Residues 272–292 (MMESLFYTVIVPLLNPMIYSL) form a helical membrane-spanning segment. Over 293–310 (RNKQVIASFTKMFKRNDV) the chain is Cytoplasmic.

Belongs to the G-protein coupled receptor 1 family.

It is found in the cell membrane. In terms of biological role, odorant receptor. This is Olfactory receptor 5H14 (OR5H14) from Homo sapiens (Human).